The chain runs to 247 residues: DNA polymerase sliding clamp 1 (247 aa).

Belongs to the PCNA family. In terms of assembly, homotrimer. The subunits circularize to form a toroid; DNA passes through its center. Replication factor C (RFC) is required to load the toroid on the DNA.

In terms of biological role, sliding clamp subunit that acts as a moving platform for DNA processing. Responsible for tethering the catalytic subunit of DNA polymerase and other proteins to DNA during high-speed replication. This chain is DNA polymerase sliding clamp 1, found in Sulfolobus acidocaldarius (strain ATCC 33909 / DSM 639 / JCM 8929 / NBRC 15157 / NCIMB 11770).